The chain runs to 303 residues: D-alanine--D-alanine ligase (303 aa).

The region spanning 104–300 (KLLWNAVGLP…FEKLVERVLE (197 aa)) is the ATP-grasp domain. 132–187 (IAKLSLPVFVKPSSEGSSVGVFKVKTKEELLPAITAALEFDTIVLVEEFLTGAEYS) is a binding site for ATP. The Mg(2+) site is built by Asp-254, Glu-267, and Asn-269.

Belongs to the D-alanine--D-alanine ligase family. It depends on Mg(2+) as a cofactor. The cofactor is Mn(2+).

It localises to the cytoplasm. The enzyme catalyses 2 D-alanine + ATP = D-alanyl-D-alanine + ADP + phosphate + H(+). The protein operates within cell wall biogenesis; peptidoglycan biosynthesis. Functionally, cell wall formation. This chain is D-alanine--D-alanine ligase, found in Haemophilus ducreyi (strain 35000HP / ATCC 700724).